Reading from the N-terminus, the 101-residue chain is MAKKALINRNLKRQALAKKYAAKRAAIKAVINDSNATEEERFEARLRFQSIPRNAAPVRQRRRCALTGRPRGTFRKFGLGRIKIREIAMRGEIPGVVKASW.

Belongs to the universal ribosomal protein uS14 family. Part of the 30S ribosomal subunit. Contacts proteins S3 and S10.

In terms of biological role, binds 16S rRNA, required for the assembly of 30S particles and may also be responsible for determining the conformation of the 16S rRNA at the A site. In Neisseria meningitidis serogroup C / serotype 2a (strain ATCC 700532 / DSM 15464 / FAM18), this protein is Small ribosomal subunit protein uS14.